A 198-amino-acid polypeptide reads, in one-letter code: Segregation and condensation protein B (198 aa).

The interval 168 to 198 is disordered; sequence KLADPATDEPDQNEMDLFFDRFNQSKEQEEE.

It belongs to the ScpB family. In terms of assembly, homodimer. Homodimerization may be required to stabilize the binding of ScpA to the Smc head domains. Component of a cohesin-like complex composed of ScpA, ScpB and the Smc homodimer, in which ScpA and ScpB bind to the head domain of Smc. The presence of the three proteins is required for the association of the complex with DNA.

The protein localises to the cytoplasm. Functionally, participates in chromosomal partition during cell division. May act via the formation of a condensin-like complex containing Smc and ScpA that pull DNA away from mid-cell into both cell halves. The chain is Segregation and condensation protein B from Listeria monocytogenes serovar 1/2a (strain ATCC BAA-679 / EGD-e).